Reading from the N-terminus, the 140-residue chain is Lymphocyte antigen 6L (140 aa).

The N-terminal stretch at 1-20 is a signal peptide; sequence MAPLLLVLWASLVSMELTGG. The UPAR/Ly6 domain maps to 31 to 124; the sequence is LSCFECFKVL…GSWEGFWSLP (94 aa). 2 disulfides stabilise this stretch: cysteine 33/cysteine 50 and cysteine 105/cysteine 110. Serine 116 carries GPI-anchor amidated serine lipidation. Residues 117 to 140 constitute a propeptide, removed in mature form; that stretch reads WEGFWSLPGRLLLPMGLGLFCTLL.

The protein resides in the cell membrane. The chain is Lymphocyte antigen 6L from Mus musculus (Mouse).